The sequence spans 246 residues: Uridylate kinase (246 aa).

ATP is bound at residue 20–23 (KISG). Positions 28-33 (GDQGYG) are involved in allosteric activation by GTP. Residue Gly62 participates in UMP binding. Positions 63 and 67 each coordinate ATP. Residues Asp82 and 143-150 (TGNPYFTT) each bind UMP. The ATP site is built by Thr170, Tyr176, and Asp179.

The protein belongs to the UMP kinase family. Homohexamer.

It localises to the cytoplasm. It catalyses the reaction UMP + ATP = UDP + ADP. Its pathway is pyrimidine metabolism; CTP biosynthesis via de novo pathway; UDP from UMP (UMPK route): step 1/1. Its activity is regulated as follows. Allosterically activated by GTP. Inhibited by UTP. Functionally, catalyzes the reversible phosphorylation of UMP to UDP. The sequence is that of Uridylate kinase from Cereibacter sphaeroides (strain ATCC 17029 / ATH 2.4.9) (Rhodobacter sphaeroides).